Reading from the N-terminus, the 339-residue chain is tRNA dimethylallyltransferase (339 aa).

36 to 43 (GPTGSGKT) is an ATP binding site. 38-43 (TGSGKT) is a binding site for substrate. The tract at residues 61–64 (DSMQ) is interaction with substrate tRNA.

Belongs to the IPP transferase family. As to quaternary structure, monomer. It depends on Mg(2+) as a cofactor.

The enzyme catalyses adenosine(37) in tRNA + dimethylallyl diphosphate = N(6)-dimethylallyladenosine(37) in tRNA + diphosphate. In terms of biological role, catalyzes the transfer of a dimethylallyl group onto the adenine at position 37 in tRNAs that read codons beginning with uridine, leading to the formation of N6-(dimethylallyl)adenosine (i(6)A). The polypeptide is tRNA dimethylallyltransferase (Chlamydia trachomatis serovar L2 (strain ATCC VR-902B / DSM 19102 / 434/Bu)).